We begin with the raw amino-acid sequence, 1232 residues long: DNA-directed RNA polymerase subunit beta (1232 aa).

The disordered stretch occupies residues 1170-1232 (SVDEDADELE…LDLDDFGDEH (63 aa)). Positions 1171 to 1180 (VDEDADELEV) are enriched in acidic residues. Residues 1189 to 1198 (PEEKEEKEKE) are compositionally biased toward basic and acidic residues. The segment covering 1199 to 1232 (DSDEYDDLREEDVEPDLEELSLDDLDLDDFGDEH) has biased composition (acidic residues).

It belongs to the RNA polymerase beta chain family. In terms of assembly, the RNAP catalytic core consists of 2 alpha, 1 beta, 1 beta' and 1 omega subunit. When a sigma factor is associated with the core the holoenzyme is formed, which can initiate transcription.

The enzyme catalyses RNA(n) + a ribonucleoside 5'-triphosphate = RNA(n+1) + diphosphate. In terms of biological role, DNA-dependent RNA polymerase catalyzes the transcription of DNA into RNA using the four ribonucleoside triphosphates as substrates. The chain is DNA-directed RNA polymerase subunit beta from Clostridium botulinum (strain Hall / ATCC 3502 / NCTC 13319 / Type A).